Here is a 1170-residue protein sequence, read N- to C-terminus: RNA-binding protein 33 (1170 aa).

Disordered regions lie at residues 1 to 152 and 199 to 221; these read MAAA…EGHE and KDIK…LRFK. N-acetylalanine is present on Ala2. Over residues 20–36 the composition is skewed to basic and acidic residues; it reads QFDKPGAERSWRRRAAD. The segment covering 37–49 has biased composition (acidic residues); it reads EDWDSELEDDLLG. At Ser41 the chain carries Phosphoserine. Residues 82–108 are compositionally biased toward polar residues; that stretch reads FSSQGVTISLNATSGMVTSFELSDNTN. Composition is skewed to acidic residues over residues 112-126 and 203-214; these read GEQE…GEDE and EESDEEEEDDEE. 2 positions are modified to phosphoserine: Ser205 and Ser233. Disordered regions lie at residues 259-708, 721-784, 833-863, and 942-1050; these read FEER…NSNL, MSSS…PDED, QLYA…PFPG, and AVPQ…VPPG. Over residues 267 to 278 the composition is skewed to basic residues; that stretch reads KQGRYSSRRGGR. Residues 289–306 show a composition bias toward basic and acidic residues; sequence GDQRRESTERGRMKDHRP. Pro residues predominate over residues 311-329; sequence TQPPVVPQAPPPPPPPPQQ. Low complexity-rich tracts occupy residues 335 to 348, 357 to 372, and 394 to 403; these read LFQP…LPVQ, QGMH…RMMM, and TVVTPVQVPL. The span at 419–433 shows a compositional bias: pro residues; the sequence is FPGPPEFPQHTPGPV. Arg470 is modified (asymmetric dimethylarginine). 3 stretches are compositionally biased toward pro residues: residues 481–490, 554–568, and 582–630; these read SPPPPPPPPT, FIPP…PGQP, and LHPP…PQHP. The span at 632-642 shows a compositional bias: basic residues; that stretch reads QHQHHHHHHHL. Composition is skewed to polar residues over residues 662-708 and 721-732; these read QTAQ…NSNL and MSSSRCSATPSA. Ser741 and Ser765 each carry phosphoserine. Residues 789–835 adopt a coiled-coil conformation; that stretch reads LYRLKIEEQKRLREEILKQKELRRQQQAGARKKELLERLAQQQQQLY. Ser951 is subject to Phosphoserine. Lys960 is covalently cross-linked (Glycyl lysine isopeptide (Lys-Gly) (interchain with G-Cter in SUMO2)). Phosphoserine is present on residues Ser973 and Ser991. Arg1028 is modified (asymmetric dimethylarginine; alternate). Arg1028 carries the post-translational modification Omega-N-methylarginine; alternate. In terms of domain architecture, RRM spans 1098–1170; the sequence is CVVSVEGLSS…SHINVALIVE (73 aa).

As to quaternary structure, associates with the NXF1-NXT1 RNA export complex. Interacts with ALKBH5; facilitating ALKBH5 recruitment to m6A-containing transcripts. Interacts with SENP1; promoting ALKBH5 deSUMOylation and subsequent activation.

The protein localises to the nucleus. It localises to the cytoplasm. Its function is as follows. RNA reader protein, which recognizes and binds specific RNAs, thereby regulating RNA metabolic processes, such as mRNA export, mRNA stability and/or translation. Binds a subset of intronless RNAs containing GC-rich elements, such as NORAD, and promotes their nuclear export by recruiting target RNAs to components of the NXF1-NXT1 RNA export machinery. Specifically recognizes and binds N6-methyladenosine (m6A)-containing mRNAs, promoting their demethylation by ALKBH5. Acts as an molecular adapter, which (1) promotes ALKBH5 recruitment to m6A-containing transcripts and (2) activates ALKBH5 demethylase activity by recruiting SENP1, leading to ALKBH5 deSUMOylation and subsequent activation. The sequence is that of RNA-binding protein 33 from Homo sapiens (Human).